A 104-amino-acid chain; its full sequence is Pole-localizer protein TmaR (104 aa).

Coiled-coil stretches lie at residues 7-34 (IVNQ…NRKR) and 76-96 (SAEI…LTEE).

This sequence belongs to the pole-localizer TmaR family.

The protein localises to the cytoplasm. Its function is as follows. Pole-localizer protein involved in the regulation of several cellular processes. This chain is Pole-localizer protein TmaR, found in Vibrio campbellii (strain ATCC BAA-1116).